The sequence spans 256 residues: Metallo-beta-lactamase type 2 (256 aa).

The N-terminal stretch at 1–29 (MKNTLLKLGVCVSLLGITPFVSTISSVQA) is a signal peptide. Residues histidine 115, histidine 117, aspartate 119, histidine 178, and cysteine 197 each coordinate Zn(2+). Positions 200 and 209 each coordinate substrate. Histidine 239 is a Zn(2+) binding site.

The protein belongs to the metallo-beta-lactamase superfamily. Class-B beta-lactamase family. As to quaternary structure, monomer. Requires Zn(2+) as cofactor.

The protein resides in the periplasm. It catalyses the reaction a beta-lactam + H2O = a substituted beta-amino acid. Inhibited by chelating agents such as EDTA. In terms of biological role, confers resistance to the different beta-lactams antibiotics (penicillin, cephalosporin and carbapenem) via the hydrolysis of the beta-lactam ring. Benzylpenicillin is a better substrate than cephalosporin C and ampicillin. The sequence is that of Metallo-beta-lactamase type 2 from Bacillus cereus.